The following is a 213-amino-acid chain: Imidazole glycerol phosphate synthase subunit HisH 1 (213 aa).

The Glutamine amidotransferase type-1 domain occupies 3 to 213 (SVSIVDYGVG…LSIIQQFLQI (211 aa)). C81 (nucleophile) is an active-site residue. Residues H195 and E197 contribute to the active site.

In terms of assembly, heterodimer of HisH and HisF.

Its subcellular location is the cytoplasm. The catalysed reaction is 5-[(5-phospho-1-deoxy-D-ribulos-1-ylimino)methylamino]-1-(5-phospho-beta-D-ribosyl)imidazole-4-carboxamide + L-glutamine = D-erythro-1-(imidazol-4-yl)glycerol 3-phosphate + 5-amino-1-(5-phospho-beta-D-ribosyl)imidazole-4-carboxamide + L-glutamate + H(+). It carries out the reaction L-glutamine + H2O = L-glutamate + NH4(+). Its pathway is amino-acid biosynthesis; L-histidine biosynthesis; L-histidine from 5-phospho-alpha-D-ribose 1-diphosphate: step 5/9. In terms of biological role, IGPS catalyzes the conversion of PRFAR and glutamine to IGP, AICAR and glutamate. The HisH subunit provides the glutamine amidotransferase activity that produces the ammonia necessary to HisF for the synthesis of IGP and AICAR. This is Imidazole glycerol phosphate synthase subunit HisH 1 from Legionella pneumophila (strain Paris).